Consider the following 164-residue polypeptide: MDKLGVDLPLLISQIVNFCLLAFLLNTFLYKPVLNALQARSERIRESLDNAEKVKQQLARVDADYEAKLQEARREGQTIISQAQERARAQEAELLVVARNNAAKIEEEARGKVEQERQQVLRGLQGQLASLVTETASNVLGRELQTKGHDELINKSIDQLGRLN.

The helical transmembrane segment at 10–30 (LLISQIVNFCLLAFLLNTFLY) threads the bilayer.

This sequence belongs to the ATPase B chain family. As to quaternary structure, F-type ATPases have 2 components, F(1) - the catalytic core - and F(0) - the membrane proton channel. F(1) has five subunits: alpha(3), beta(3), gamma(1), delta(1), epsilon(1). F(0) has three main subunits: a(1), b(2) and c(10-14). The alpha and beta chains form an alternating ring which encloses part of the gamma chain. F(1) is attached to F(0) by a central stalk formed by the gamma and epsilon chains, while a peripheral stalk is formed by the delta and b chains.

It localises to the cell membrane. In terms of biological role, f(1)F(0) ATP synthase produces ATP from ADP in the presence of a proton or sodium gradient. F-type ATPases consist of two structural domains, F(1) containing the extramembraneous catalytic core and F(0) containing the membrane proton channel, linked together by a central stalk and a peripheral stalk. During catalysis, ATP synthesis in the catalytic domain of F(1) is coupled via a rotary mechanism of the central stalk subunits to proton translocation. Component of the F(0) channel, it forms part of the peripheral stalk, linking F(1) to F(0). The protein is ATP synthase subunit b of Herpetosiphon aurantiacus (strain ATCC 23779 / DSM 785 / 114-95).